The chain runs to 144 residues: Phospholipase A2, membrane associated (144 aa).

An N-terminal signal peptide occupies residues 1-20 (MKTLLLLAVIMAIGLLQVHG). 7 disulfides stabilise this stretch: Cys-46/Cys-137, Cys-48/Cys-64, Cys-63/Cys-117, Cys-69/Cys-144, Cys-70/Cys-110, Cys-79/Cys-103, and Cys-97/Cys-108. Ca(2+)-binding residues include Tyr-47, Gly-49, and Ser-51. His-67 is an active-site residue. Asp-68 provides a ligand contact to Ca(2+). Asp-111 is a catalytic residue.

The protein belongs to the phospholipase A2 family. It depends on Ca(2+) as a cofactor.

The protein resides in the secreted. It is found in the cell membrane. Its subcellular location is the mitochondrion outer membrane. The enzyme catalyses a 1,2-diacyl-sn-glycero-3-phosphoethanolamine + H2O = a 1-acyl-sn-glycero-3-phosphoethanolamine + a fatty acid + H(+). It catalyses the reaction 1-hexadecanoyl-2-(9Z-octadecenoyl)-sn-glycero-3-phosphoethanolamine + H2O = 1-hexadecanoyl-sn-glycero-3-phosphoethanolamine + (9Z)-octadecenoate + H(+). The catalysed reaction is 1-hexadecanoyl-2-(9Z,12Z-octadecadienoyl)-sn-glycero-3-phosphoethanolamine + H2O = 1-hexadecanoyl-sn-glycero-3-phosphoethanolamine + (9Z,12Z)-octadecadienoate + H(+). It carries out the reaction 1-hexadecanoyl-2-(5Z,8Z,11Z,14Z-eicosatetraenoyl)-sn-glycero-3-phosphoethanolamine + H2O = 1-hexadecanoyl-sn-glycero-3-phosphoethanolamine + (5Z,8Z,11Z,14Z)-eicosatetraenoate + H(+). The enzyme catalyses N-hexadecanoyl-1,2-di-(9Z-octadecenoyl)-sn-glycero-3-phosphoethanolamine + H2O = N-hexadecanoyl-1-(9Z-octadecenoyl)-sn-glycero-3-phosphoethanolamine + (9Z)-octadecenoate + H(+). It catalyses the reaction 1,2-dihexadecanoyl-sn-glycero-3-phospho-(1'-sn-glycerol) + H2O = 1-hexadecanoyl-sn-glycero-3-phospho-(1'-sn-glycerol) + hexadecanoate + H(+). The catalysed reaction is 1-hexadecanoyl-2-(9Z-octadecenoyl)-sn-glycero-3-phosphoglycerol + H2O = 1-hexadecanoyl-sn-glycero-3-phosphoglycerol + (9Z)-octadecenoate + H(+). It carries out the reaction 1-hexadecanoyl-2-(9Z-octadecenoyl)-sn-glycero-3-phospho-(1'-sn-glycerol) + H2O = 1-hexadecanoyl-sn-glycero-3-phospho-(1'-sn-glycerol) + (9Z)-octadecenoate + H(+). The enzyme catalyses a 1,2-diacyl-sn-glycero-3-phosphocholine + H2O = a 1-acyl-sn-glycero-3-phosphocholine + a fatty acid + H(+). It catalyses the reaction 1,2-dihexadecanoyl-sn-glycero-3-phosphocholine + H2O = 1-hexadecanoyl-sn-glycero-3-phosphocholine + hexadecanoate + H(+). The catalysed reaction is 1-hexadecanoyl-2-(9Z-octadecenoyl)-sn-glycero-3-phosphocholine + H2O = 1-hexadecanoyl-sn-glycero-3-phosphocholine + (9Z)-octadecenoate + H(+). It carries out the reaction 1-hexadecanoyl-2-(9Z,12Z-octadecadienoyl)-sn-glycero-3-phosphocholine + H2O = (9Z,12Z)-octadecadienoate + 1-hexadecanoyl-sn-glycero-3-phosphocholine + H(+). The enzyme catalyses 1-hexadecanoyl-2-(4Z,7Z,10Z,13Z,16Z,19Z-docosahexaenoyl)-sn-glycero-3-phosphocholine + H2O = (4Z,7Z,10Z,13Z,16Z,19Z)-docosahexaenoate + 1-hexadecanoyl-sn-glycero-3-phosphocholine + H(+). In terms of biological role, secretory calcium-dependent phospholipase A2 that primarily targets extracellular phospholipids with implications in host antimicrobial defense, inflammatory response and tissue regeneration. Hydrolyzes the ester bond of the fatty acyl group attached at sn-2 position of phospholipids (phospholipase A2 activity) with preference for phosphatidylethanolamines and phosphatidylglycerols over phosphatidylcholines. Contributes to lipid remodeling of cellular membranes and generation of lipid mediators involved in pathogen clearance. Displays bactericidal activity against Gram-positive bacteria by directly hydrolyzing phospholipids of the bacterial membrane. Upon sterile inflammation, targets membrane phospholipids of extracellular mitochondria released from activated platelets, generating free unsaturated fatty acids such as arachidonate that is used by neighboring leukocytes to synthesize inflammatory eicosanoids such as leukotrienes. Simultaneously, by compromising mitochondrial membrane integrity, promotes the release in circulation of potent damage-associated molecular pattern molecules that activate the innate immune response. Plays a stem cell regulator role in the intestinal crypt. Within intracellular compartment mediates Paneth cell differentiation and its stem cell supporting functions by inhibiting Wnt signaling pathway in intestinal stem cell (ICS). Secreted in the intestinal lumen upon inflammation, acts in an autocrine way and promotes prostaglandin E2 synthesis that stimulates Wnt signaling pathway in ICS cells and tissue regeneration. May play a role in the biosynthesis of N-acyl ethanolamines that regulate energy metabolism and inflammation. Hydrolyzes N-acyl phosphatidylethanolamines to N-acyl lysophosphatidylethanolamines, which are further cleaved by a lysophospholipase D to release N-acyl ethanolamines. Independent of its catalytic activity, acts as a ligand for integrins. Binds to and activates integrins ITGAV:ITGB3, ITGA4:ITGB1 and ITGA5:ITGB1. Binds to a site (site 2) which is distinct from the classical ligand-binding site (site 1) and induces integrin conformational changes and enhanced ligand binding to site 1. Induces cell proliferation in an integrin-dependent manner. The protein is Phospholipase A2, membrane associated (PLA2G2A) of Bos taurus (Bovine).